The primary structure comprises 154 residues: Transcriptional repressor NrdR (154 aa).

A zinc finger lies at 3 to 34 (CPFCGANDTKVIDSRLVAEGEQVRRRRECLAC). An ATP-cone domain is found at 49–139 (PRLIKTDGSR…VYRRFQDLNE (91 aa)).

The protein belongs to the NrdR family. Requires Zn(2+) as cofactor.

Functionally, negatively regulates transcription of bacterial ribonucleotide reductase nrd genes and operons by binding to NrdR-boxes. The sequence is that of Transcriptional repressor NrdR from Pseudomonas fluorescens (strain Pf0-1).